We begin with the raw amino-acid sequence, 365 residues long: Putative carbonic anhydrase-like protein 1 (365 aa).

Residues 1-25 form the signal peptide; sequence MRFECSHFPLFLIILTCHISPLKSS. Residues 28–356 enclose the Alpha-carbonic anhydrase domain; it reads YQWSYDSDVF…TNNRLVRTNI (329 aa). Tyr-223 is an active-site residue. Substrate contacts are provided by residues Thr-295 and 295–296; that span reads TS.

This sequence belongs to the alpha-carbonic anhydrase family.

The protein resides in the secreted. In Caenorhabditis elegans, this protein is Putative carbonic anhydrase-like protein 1 (cah-1).